The sequence spans 96 residues: Co-chaperonin GroES (96 aa).

Belongs to the GroES chaperonin family. Heptamer of 7 subunits arranged in a ring. Interacts with the chaperonin GroEL.

Its subcellular location is the cytoplasm. Its function is as follows. Together with the chaperonin GroEL, plays an essential role in assisting protein folding. The GroEL-GroES system forms a nano-cage that allows encapsulation of the non-native substrate proteins and provides a physical environment optimized to promote and accelerate protein folding. GroES binds to the apical surface of the GroEL ring, thereby capping the opening of the GroEL channel. The polypeptide is Co-chaperonin GroES (Chromohalobacter salexigens (strain ATCC BAA-138 / DSM 3043 / CIP 106854 / NCIMB 13768 / 1H11)).